A 607-amino-acid chain; its full sequence is Nexilin (607 aa).

The span at 1 to 14 (MNDVSQKAEIKEML) shows a compositional bias: basic and acidic residues. Disordered stretches follow at residues 1-143 (MNDV…EDKM) and 165-268 (ETEA…RRRI). A Phosphoserine modification is found at Ser-16. Composition is skewed to basic and acidic residues over residues 40–85 (GKFD…RAEQ), 120–143 (KTKDPEDLDREEGNGRTNHEEDKM), 167–221 (EAKK…HMVN), and 228–268 (DRET…RRRI). Position 172 is a phosphoserine (Ser-172). Phosphoserine is present on residues Ser-281, Ser-288, and Ser-296. Position 301 is a phosphothreonine (Thr-301). 2 disordered regions span residues 419 to 444 (NFHEDDDVDVRPAKKSESPFTHKVNM) and 480 to 514 (AALQKKREDEEEEEGSIVNGSTTEDEEQTRSGAPW). A phosphoserine mark is found at Ser-495 and Ser-500. Residue Thr-502 is modified to Phosphothreonine. One can recognise an Ig-like domain in the interval 513 to 601 (PWFKKPLRNT…GSAASTCILT (89 aa)).

Interacts with F-actin.

Its subcellular location is the cytoplasm. The protein resides in the cytoskeleton. The protein localises to the cell junction. It is found in the adherens junction. It localises to the myofibril. Its subcellular location is the sarcomere. The protein resides in the z line. In terms of biological role, involved in regulating cell migration through association with the actin cytoskeleton. Has an essential role in the maintenance of Z line and sarcomere integrity. In Mus musculus (Mouse), this protein is Nexilin.